Reading from the N-terminus, the 302-residue chain is Glycine--tRNA ligase alpha subunit (302 aa).

This sequence belongs to the class-II aminoacyl-tRNA synthetase family. Tetramer of two alpha and two beta subunits.

It localises to the cytoplasm. The enzyme catalyses tRNA(Gly) + glycine + ATP = glycyl-tRNA(Gly) + AMP + diphosphate. This is Glycine--tRNA ligase alpha subunit from Xanthomonas oryzae pv. oryzae (strain MAFF 311018).